A 1429-amino-acid chain; its full sequence is DNA-directed RNA polymerase subunit beta' (1429 aa).

Residues Cys-68, Cys-70, Cys-83, and Cys-86 each contribute to the Zn(2+) site. The Mg(2+) site is built by Asp-459, Asp-461, and Asp-463. Zn(2+) is bound by residues Cys-805, Cys-879, Cys-886, and Cys-889. The disordered stretch occupies residues 1407-1429 (ESFPLLGGDGEPASTTSSTTEGE). The segment covering 1419–1429 (ASTTSSTTEGE) has biased composition (polar residues).

This sequence belongs to the RNA polymerase beta' chain family. The RNAP catalytic core consists of 2 alpha, 1 beta, 1 beta' and 1 omega subunit. When a sigma factor is associated with the core the holoenzyme is formed, which can initiate transcription. Requires Mg(2+) as cofactor. It depends on Zn(2+) as a cofactor.

The enzyme catalyses RNA(n) + a ribonucleoside 5'-triphosphate = RNA(n+1) + diphosphate. DNA-dependent RNA polymerase catalyzes the transcription of DNA into RNA using the four ribonucleoside triphosphates as substrates. The polypeptide is DNA-directed RNA polymerase subunit beta' (Rhodopirellula baltica (strain DSM 10527 / NCIMB 13988 / SH1)).